We begin with the raw amino-acid sequence, 83 residues long: Small ribosomal subunit protein uS17 (83 aa).

This sequence belongs to the universal ribosomal protein uS17 family. Part of the 30S ribosomal subunit.

In terms of biological role, one of the primary rRNA binding proteins, it binds specifically to the 5'-end of 16S ribosomal RNA. This is Small ribosomal subunit protein uS17 from Nitratiruptor sp. (strain SB155-2).